A 910-amino-acid chain; its full sequence is Protein CHROMATIN REMODELING 25 (910 aa).

Composition is skewed to acidic residues over residues 1–18 (MEEE…DDSS) and 26–39 (QDSE…ECED). Residues 1–39 (MEEEDEEILSSSDCDDSSDSYKDDSQDSEGENDNPECED) are disordered. Residues 198–371 (LHGSANINGC…FAMVNFTNPG (174 aa)) enclose the Helicase ATP-binding domain. An ATP-binding site is contributed by 211–218 (DDMGLGKT). The DEAH box signature appears at 322–325 (DEAH). A coiled-coil region spans residues 396 to 417 (TEEEKNLAADRSAELSSKVNQF). The Helicase C-terminal domain maps to 538–696 (VLSRLLANLR…QTDNSTRQGN (159 aa)). A disordered region spans residues 828–861 (VSPKTVESEEHNRNQPVNKRAFNKPQQRPREPLQ).

It belongs to the SNF2/RAD54 helicase family. Interacts with RAD51. Binds to the geminivirus mungbean yellow mosaic virus (MYMV) and to the tomato leaf curl virus (ToLCV) replication-associated proteins. As to expression, expressed ubiquitously, with the highest levels of expression in flower buds. Present in flower buds (at protein level).

It localises to the nucleus. Functionally, dissociates RAD51 from nucleoprotein filaments formed on dsDNA. Could be involved in the turnover of RAD51 protein-dsDNA filaments. Addition of RAD54 overcomes inhibition of DNA strand exchange by RAD51 bound to substrate dsDNA. Species preference in the RAD51 dissociation and DNA strand exchange assays underlines the importance of specific RAD54-RAD51 interactions. RAD51 is unable to release dsDNA upon ATP hydrolysis, leaving it stuck on the heteroduplex DNA product after DNA strand exchange. Involved in DNA repair and mitotic recombination. Functions in the homologous recombinational DNA repair (RAD52) pathway. Required for synthesis-dependent strand annealing (SDSA) during double-strand break repair. Facilitates geminiviral replication (e.g. geminivirus mungbean yellow mosaic virus (MYMV) and tomato leaf curl virus (ToLCV)). In Arabidopsis thaliana (Mouse-ear cress), this protein is Protein CHROMATIN REMODELING 25 (CHR25).